The following is a 248-amino-acid chain: Aquaporin Z (248 aa).

2 consecutive transmembrane segments (helical) span residues 11 to 31 (FIGT…AAAF) and 36 to 56 (IGFA…AFAI). Residues 65 to 67 (NPA) carry the NPA 1 motif. 3 helical membrane passes run 87–107 (IAAQ…IAGG), 132–152 (LLAC…IILG), and 161–181 (GFAP…SIPV). Positions 187–189 (NPA) match the NPA 2 motif. A helical membrane pass occupies residues 203 to 223 (IAELWLFWLAPIVGAALAGLF).

Belongs to the MIP/aquaporin (TC 1.A.8) family. In terms of assembly, homotetramer.

Its subcellular location is the cell inner membrane. It catalyses the reaction H2O(in) = H2O(out). Its function is as follows. Channel that permits osmotically driven movement of water in both directions. It is involved in the osmoregulation and in the maintenance of cell turgor during volume expansion in rapidly growing cells. It mediates rapid entry or exit of water in response to abrupt changes in osmolarity. This chain is Aquaporin Z, found in Gloeobacter violaceus (strain ATCC 29082 / PCC 7421).